The sequence spans 563 residues: Sulfite reductase [NADPH] hemoprotein beta-component (563 aa).

Positions 427, 433, 472, and 476 each coordinate [4Fe-4S] cluster. Residue cysteine 476 participates in siroheme binding.

This sequence belongs to the nitrite and sulfite reductase 4Fe-4S domain family. Alpha(8)-beta(8). The alpha component is a flavoprotein, the beta component is a hemoprotein. The cofactor is siroheme. [4Fe-4S] cluster serves as cofactor.

It carries out the reaction hydrogen sulfide + 3 NADP(+) + 3 H2O = sulfite + 3 NADPH + 4 H(+). The protein operates within sulfur metabolism; hydrogen sulfide biosynthesis; hydrogen sulfide from sulfite (NADPH route): step 1/1. Functionally, component of the sulfite reductase complex that catalyzes the 6-electron reduction of sulfite to sulfide. This is one of several activities required for the biosynthesis of L-cysteine from sulfate. The protein is Sulfite reductase [NADPH] hemoprotein beta-component of Acidithiobacillus ferrooxidans (strain ATCC 53993 / BNL-5-31) (Leptospirillum ferrooxidans (ATCC 53993)).